Consider the following 470-residue polypeptide: Calmodulin-binding receptor-like cytoplasmic kinase 1 (470 aa).

2 disordered regions span residues Met-1–Asp-29 and Pro-65–Trp-128. The segment covering Pro-65–Ser-82 has biased composition (basic and acidic residues). 2 stretches are compositionally biased toward polar residues: residues Thr-83–Arg-98 and Tyr-108–Asp-121. A Protein kinase domain is found at Phe-147–Ala-423. ATP is bound by residues Ile-153 to Val-161 and Lys-175. Positions Phe-162–Ser-185 are caM-binding. Asp-273 functions as the Proton acceptor in the catalytic mechanism. Ser-277 and Ser-308 each carry phosphoserine. Thr-309 bears the Phosphothreonine mark. Residue Tyr-322 is modified to Phosphotyrosine.

The protein belongs to the protein kinase superfamily. Ser/Thr protein kinase family. Interacts with calmodulin (CaM) in a Ca(2+)-dependent manner. The cofactor is Mg(2+). Post-translationally, autophosphorylated.

Its subcellular location is the cytoplasm. It catalyses the reaction L-seryl-[protein] + ATP = O-phospho-L-seryl-[protein] + ADP + H(+). The catalysed reaction is L-threonyl-[protein] + ATP = O-phospho-L-threonyl-[protein] + ADP + H(+). Its activity is regulated as follows. Up-regulated by Ca(2+)/CaM. The polypeptide is Calmodulin-binding receptor-like cytoplasmic kinase 1 (CRCK1) (Arabidopsis thaliana (Mouse-ear cress)).